The sequence spans 482 residues: Glutamate--tRNA ligase (482 aa).

Residues 9–19 (PSPTGPLHIGG) carry the 'HIGH' region motif. The 'KMSKS' region signature appears at 250–254 (KMSKR). Lys253 is an ATP binding site.

The protein belongs to the class-I aminoacyl-tRNA synthetase family. Glutamate--tRNA ligase type 1 subfamily. In terms of assembly, monomer.

It localises to the cytoplasm. It catalyses the reaction tRNA(Glu) + L-glutamate + ATP = L-glutamyl-tRNA(Glu) + AMP + diphosphate. Catalyzes the attachment of glutamate to tRNA(Glu) in a two-step reaction: glutamate is first activated by ATP to form Glu-AMP and then transferred to the acceptor end of tRNA(Glu). The polypeptide is Glutamate--tRNA ligase (Desulforamulus reducens (strain ATCC BAA-1160 / DSM 100696 / MI-1) (Desulfotomaculum reducens)).